The following is a 287-amino-acid chain: MSESAIADFVSSFIPDTATHVEPVRGRVVMSKRRIVLAADDEKTTIPLNGVFDVQHETAPGDLARFFEDTVTIAYEHDEDRHVAVIEGGGSTVDRFVTLVFKALVHGTTVYAKHPARRGGRITDQPFEKGNLALSPGDLTITGDADTTIDLSTVSHFERVDREVNGSNKQLLSVRHMGSTGPITTELALSSGRKMNLLGRYIRLQYTHLKQELADVTLTSEEIEALVAIYSSGPNASLAAVLGVDASRVTMLLNDLIEKELVTDDDGIALTSLGRAAVSEHIEDVNL.

As to quaternary structure, interacts with chemotaxis (Che) proteins as well as flagella accessory (Fla) proteins.

Its function is as follows. Involved in taxis signal transduction. In Halobacterium salinarum (strain ATCC 29341 / DSM 671 / R1), this protein is Taxis protein CheF2 (cheF2).